An 87-amino-acid polypeptide reads, in one-letter code: Small ribosomal subunit protein bS20 (87 aa).

The segment covering 1 to 11 (MANIKSAKKRA) has biased composition (basic residues). The segment at 1-27 (MANIKSAKKRAVQSEKRRQHNASQRSM) is disordered.

It belongs to the bacterial ribosomal protein bS20 family.

Binds directly to 16S ribosomal RNA. The polypeptide is Small ribosomal subunit protein bS20 (Haemophilus influenzae (strain PittEE)).